A 1620-amino-acid polypeptide reads, in one-letter code: Probable serine/threonine-protein kinase gdt4 (1620 aa).

Residues 1 to 19 form the signal peptide; sequence MKLEQRIFFLICLVINSFS. The Extracellular portion of the chain corresponds to 20–891; that stretch reads NCSLLVAPDG…EVIGINEQLN (872 aa). The chain crosses the membrane as a helical span at residues 892–912; it reads ILAIVLPITISLFAAASILAG. Residues 913–1620 are Cytoplasmic-facing; it reads YLVIKKYKKP…AKRNKKNQNQ (708 aa). One can recognise a Protein kinase domain in the interval 1349–1604; the sequence is IVLEKYLSEG…TLIDLLEKLL (256 aa). ATP contacts are provided by residues 1355–1363 and lysine 1376; that span reads LSEGSFGVV. Aspartate 1466 acts as the Proton acceptor in catalysis.

The protein in the N-terminal section; belongs to the GDT family. This sequence in the C-terminal section; belongs to the protein kinase superfamily. TKL Ser/Thr protein kinase family.

Its subcellular location is the membrane. The enzyme catalyses L-seryl-[protein] + ATP = O-phospho-L-seryl-[protein] + ADP + H(+). It catalyses the reaction L-threonyl-[protein] + ATP = O-phospho-L-threonyl-[protein] + ADP + H(+). The sequence is that of Probable serine/threonine-protein kinase gdt4 (gdt4) from Dictyostelium discoideum (Social amoeba).